Reading from the N-terminus, the 369-residue chain is Ferrochelatase (369 aa).

Positions 210 and 291 each coordinate Fe cation.

The protein belongs to the ferrochelatase family.

It localises to the cytoplasm. It carries out the reaction heme b + 2 H(+) = protoporphyrin IX + Fe(2+). Its pathway is porphyrin-containing compound metabolism; protoheme biosynthesis; protoheme from protoporphyrin-IX: step 1/1. Catalyzes the ferrous insertion into protoporphyrin IX. The polypeptide is Ferrochelatase (Thioalkalivibrio sulfidiphilus (strain HL-EbGR7)).